The primary structure comprises 64 residues: Putative antitoxin VapB51 (64 aa).

Its function is as follows. Possibly the antitoxin component of a type II toxin-antitoxin (TA) system. Its cognate toxin is VapC51. In Mycobacterium tuberculosis (strain ATCC 25618 / H37Rv), this protein is Putative antitoxin VapB51.